Consider the following 103-residue polypeptide: Large ribosomal subunit protein uL24 (103 aa).

Belongs to the universal ribosomal protein uL24 family. In terms of assembly, part of the 50S ribosomal subunit.

Its function is as follows. One of two assembly initiator proteins, it binds directly to the 5'-end of the 23S rRNA, where it nucleates assembly of the 50S subunit. One of the proteins that surrounds the polypeptide exit tunnel on the outside of the subunit. In Corynebacterium urealyticum (strain ATCC 43042 / DSM 7109), this protein is Large ribosomal subunit protein uL24.